The chain runs to 318 residues: Chlorophyllase-2 (318 aa).

The GXSXG signature appears at 136-140; sequence GHSRG. Catalysis depends on S138, which acts as the Nucleophile. Residues D167 and H244 each act as charge relay system in the active site.

Belongs to the AB hydrolase superfamily. Lipase family. As to expression, expressed in leaves, flowers and flower buds, but not in roots.

It localises to the cytoplasm. The protein resides in the cytosol. The catalysed reaction is a chlorophyll + H2O = a chlorophyllide + phytol + H(+). The enzyme catalyses chlorophyll a + H2O = phytol + chlorophyllide a + H(+). Its pathway is porphyrin-containing compound metabolism; chlorophyll degradation. Catalyzes the hydrolysis of ester bond in chlorophyll to yield chlorophyllide and phytol. Does not seem to be required for chlorophyll degradation during senescence. The chain is Chlorophyllase-2 from Arabidopsis thaliana (Mouse-ear cress).